The chain runs to 75 residues: Small ribosomal subunit protein bS18c (75 aa).

Over residues 1 to 12 the composition is skewed to basic residues; sequence MNKSKRSFRRRL. The disordered stretch occupies residues 1–21; it reads MNKSKRSFRRRLPPIGSRDQI.

This sequence belongs to the bacterial ribosomal protein bS18 family. Part of the 30S ribosomal subunit.

Its subcellular location is the plastid. It localises to the chloroplast. The chain is Small ribosomal subunit protein bS18c from Cycas taitungensis (Prince sago).